The sequence spans 238 residues: Probable succinyl-CoA:3-ketoacid coenzyme A transferase subunit A (238 aa).

24–30 is a CoA binding site; the sequence is GGFGLCG.

It belongs to the 3-oxoacid CoA-transferase subunit A family. In terms of assembly, heterodimer of a subunit A and a subunit B.

It carries out the reaction a 3-oxo acid + succinyl-CoA = a 3-oxoacyl-CoA + succinate. The sequence is that of Probable succinyl-CoA:3-ketoacid coenzyme A transferase subunit A (scoA) from Bacillus subtilis (strain 168).